The sequence spans 803 residues: MASIVMKSQHSLGYPNIGNINRSDYDSYEQQYNNPTGSKQYNNNNNNNTNTNEINNGTNTNLNPNNMYGMYNNNNNNNNNNNNNNNNNNNNNNSNNNNNNNNNNNINNNNNNNNNNNNNNNNNNQHLSQSQQLSPTPYSSNSFSKLLSRSTNDLMLDQDDPSKKKRKRTSPDQLKLLEKIFMAHQHPNLNLRSQLAVELHMTARSVQIWFQNRRAKARNMEFKPQLSHGGSDLIYNALGSQNGMNSMGGGGGNGGGNGGGGMNGINNILNGNHNRNLNKYIPHGGNSINGNMGGGGGGGGGSHNHHHHNHNHNHHNHNHNHNHNQPLSNGDCGEKFSVASAWNKILLHPNNIDFLIRYNPDDPNSIDVNARDSKGLSLLFTAAFLGYEYQVRRLIESGANPNIKDNQGNTPLIAASVLGNQPIVELLLEHRADPNLVNDEGVSPLFSACKGGHLQIASSLLDHDAEVSVKTKINGETPLHIASLKGFEKICKLLIETEAKASVIDSNNRTPLHHACIMGYFSIAKLLICNGADMNAIDIDGHTPLHTSSLMGHDLITRLLLENGADPNIQDSEGYTPIHYAVRESRIETVKFLIKFNSKLNIKTKNGQNLIHLSVQFASLMMGQMIFESKGCEIAADDSDDQGYTPLYLAAKAGKTNFVKYLLSKGASKKIALEKLIQENQDKEIIQMLESTVTKSSNNNNSNSNINNINNINNINNINSQPNTNSDNNNNNNNNNFNENYSNGNNEQSQPPGNKFEEDDEDDFYDRVYKKSYTNRIISNSFSYQQKLNSGNGISVNSGNLED.

The span at 23-41 shows a compositional bias: polar residues; it reads SDYDSYEQQYNNPTGSKQY. Positions 23 to 144 are disordered; it reads SDYDSYEQQY…PTPYSSNSFS (122 aa). Residues 42–124 are compositionally biased toward low complexity; it reads NNNNNNNTNT…NNNNNNNNNN (83 aa). Over residues 125–138 the composition is skewed to polar residues; it reads QHLSQSQQLSPTPY. Residues 162-221 constitute a DNA-binding region (homeobox); it reads SKKKRKRTSPDQLKLLEKIFMAHQHPNLNLRSQLAVELHMTARSVQIWFQNRRAKARNME. The disordered stretch occupies residues 288 to 330; sequence INGNMGGGGGGGGGSHNHHHHNHNHNHHNHNHNHNHNQPLSNG. The span at 291–302 shows a compositional bias: gly residues; that stretch reads NMGGGGGGGGGS. Residues 303-322 show a composition bias toward basic residues; sequence HNHHHHNHNHNHHNHNHNHN. 9 ANK repeats span residues 374–403, 407–436, 440–469, 474–503, 507–536, 540–569, 573–602, 606–636, and 642–671; these read KGLS…NPNI, QGNT…DPNL, EGVS…EVSV, NGET…KASV, NNRT…DMNA, DGHT…DPNI, EGYT…KLNI, NGQN…EIAA, and QGYT…SKKI. Residues 695 to 760 form a disordered region; the sequence is KSSNNNNSNS…PPGNKFEEDD (66 aa). Low complexity predominate over residues 696-746; the sequence is SSNNNNSNSNINNINNINNINNINSQPNTNSDNNNNNNNNNFNENYSNGNN.

Its subcellular location is the nucleus. Its function is as follows. Putative transcription factor, that seems to be involved in anterior-posterior patterning of the slug, probably by controlling the proportions of prestalk and prespore cells. This chain is Homeobox protein Wariai (warA), found in Dictyostelium discoideum (Social amoeba).